The primary structure comprises 186 residues: Ribosome-recycling factor (186 aa).

The protein belongs to the RRF family.

The protein localises to the cytoplasm. Functionally, responsible for the release of ribosomes from messenger RNA at the termination of protein biosynthesis. May increase the efficiency of translation by recycling ribosomes from one round of translation to another. The sequence is that of Ribosome-recycling factor from Rickettsia africae (strain ESF-5).